A 56-amino-acid polypeptide reads, in one-letter code: UPF0434 protein ECH_0194 (56 aa).

The protein belongs to the UPF0434 family.

This Ehrlichia chaffeensis (strain ATCC CRL-10679 / Arkansas) protein is UPF0434 protein ECH_0194.